The following is a 461-amino-acid chain: Glycine--tRNA ligase (461 aa).

Substrate is bound by residues arginine 100 and glutamate 174. Residues 206–208 (RNE), 216–221 (FRTREF), 290–291 (EL), and 334–337 (GVDR) each bind ATP. 221 to 225 (FEQME) is a substrate binding site. 330-334 (EPSVG) is a binding site for substrate.

The protein belongs to the class-II aminoacyl-tRNA synthetase family. Homodimer.

It is found in the cytoplasm. It carries out the reaction tRNA(Gly) + glycine + ATP = glycyl-tRNA(Gly) + AMP + diphosphate. Functionally, catalyzes the attachment of glycine to tRNA(Gly). The sequence is that of Glycine--tRNA ligase from Caldanaerobacter subterraneus subsp. tengcongensis (strain DSM 15242 / JCM 11007 / NBRC 100824 / MB4) (Thermoanaerobacter tengcongensis).